A 489-amino-acid chain; its full sequence is Topoisomerase I damage affected protein 11 (489 aa).

Disordered regions lie at residues M1 to A199, I263 to K321, E344 to S370, E391 to V413, and D439 to L477. The span at D19–S35 shows a compositional bias: polar residues. The span at E73–Q89 shows a compositional bias: basic and acidic residues. Polar residues-rich tracts occupy residues R90 to G103, P128 to P147, and N156 to M167. Over residues S182–S197 the composition is skewed to low complexity. The stretch at V210–S266 forms a coiled coil. Over residues I263–R281 the composition is skewed to polar residues. Over residues T396 to G411 the composition is skewed to polar residues. Positions K447–S460 are enriched in basic residues. Positions D468–L477 are enriched in acidic residues.

Belongs to the TDA11 family.

The protein resides in the cytoplasm. This Candida glabrata (strain ATCC 2001 / BCRC 20586 / JCM 3761 / NBRC 0622 / NRRL Y-65 / CBS 138) (Yeast) protein is Topoisomerase I damage affected protein 11 (TDA11).